Here is a 417-residue protein sequence, read N- to C-terminus: Hyaluronidase-3 (417 aa).

Residues 1–20 form the signal peptide; sequence MTTQLGPALVLGVALCLGCG. 5 disulfide bridges follow: Cys-42/Cys-331, Cys-205/Cys-220, Cys-356/Cys-367, Cys-361/Cys-395, and Cys-397/Cys-406. A glycan (N-linked (GlcNAc...) asparagine) is linked at Asn-69. Residue Glu-129 is the Proton donor of the active site. N-linked (GlcNAc...) asparagine glycosylation occurs at Asn-215. Residues 352–407 form the EGF-like domain; sequence AAMACSHQRCHGHGRCARRDPGQMEAFLHLWPDGSLGDWKSFSCHCYWGWAGPTCQ.

Belongs to the glycosyl hydrolase 56 family. N-glycosylated. As to expression, expressed in sperm. Highly expressed in epidermis of the skin, where it is expressed intracellularily in the deep horny layer (at protein level). Bone marrow, testis and kidney.

It is found in the secreted. The protein localises to the cell membrane. It localises to the cytoplasmic vesicle. Its subcellular location is the secretory vesicle. The protein resides in the acrosome. It is found in the endoplasmic reticulum. The protein localises to the early endosome. It carries out the reaction Random hydrolysis of (1-&gt;4)-linkages between N-acetyl-beta-D-glucosamine and D-glucuronate residues in hyaluronate.. Functionally, facilitates sperm penetration into the layer of cumulus cells surrounding the egg by digesting hyaluronic acid. Involved in induction of the acrosome reaction in the sperm. Involved in follicular atresia, the breakdown of immature ovarian follicles that are not selected to ovulate. Induces ovarian granulosa cell apoptosis, possibly via apoptotic signaling pathway involving CASP8 and CASP3 activation, and poly(ADP-ribose) polymerase (PARP) cleavage. Has no hyaluronidase activity in embryonic fibroblasts in vitro. Has no hyaluronidase activity in granulosa cells in vitro. The chain is Hyaluronidase-3 (HYAL3) from Homo sapiens (Human).